The following is a 124-amino-acid chain: Seripauperin-3 (124 aa).

Residues 7-24 (IAAGVAAIAAGIAAAPAT) form a helical membrane-spanning segment.

It belongs to the SRP1/TIP1 family. Seripauperin subfamily.

The protein resides in the membrane. This is Seripauperin-3 (PAU3) from Saccharomyces cerevisiae (strain ATCC 204508 / S288c) (Baker's yeast).